The sequence spans 182 residues: Dipetalodipin (182 aa).

The N-terminal stretch at 1–18 is a signal peptide; sequence MKTIIAAIFLGILMHAFA. 3 cysteine pairs are disulfide-bonded: Cys21–Cys134, Cys55–Cys181, and Cys87–Cys103.

This sequence belongs to the calycin superfamily. Triabin family. In terms of tissue distribution, expressed in salivary glands.

It is found in the secreted. Its function is as follows. Inhibits platelet aggregation, vasoconstriction, and angiogenesis through binding to distinct eicosanoids involved in inflammation (acts as a scavenger), and has a role in inhibiting host innate immunity by impairing platelet-assisted formation of neutrophil extracellular traps (NETs). Inhibits platelet aggregation by collagen (IC(50)=30 nM), thromboxane A2 mimetic (TXA2 mimetic), or arachidonic acid (AA) without affecting aggregation induced by ADP, convulxin (GP6 agonist), PMA, and ristocetin (vWF-dependent platelet agglutinator). Binds with high affinity to TXA2, TXB2, prostaglandine H2 mimetic (PGH2 mimetic), PGD2, PGJ2, and PGF2alpha. Also interacts with 15(S)-hydroxyeicosatetraenoic acid (HETE), being the first calycin/lipocalin described to date to bind to a derivative of 15-lipoxygenase. Binding is not observed to other prostaglandins, leukotrienes, HETEs, lipids, and biogenic amines. It prevents contraction of rat uterus stimulated by PGF2alpha and induces relaxation of aorta previously contracted with TXA2 mimetic. In addition, it inhibits angiogenesis mediated by 15(S)-HETE and does not enhance inhibition of collagen-induced platelet aggregation by SQ29548 (TXA2 antagonist) and indomethacin. Also impairs platelet-assisted formation of neutrophil extracellular traps (NETs). NETs are web-like structures of DNA and proteins that play an important role in killing of pathogens. In addition, NETs are implicated in thrombus formation. In vivo, this protein exhibits antithrombotic activity in two distinct mice models that are highly dependent on platelets. It is noteworthy that it inhibits thrombosis without promoting excessive bleeding. In Dipetalogaster maximus (Blood-sucking bug), this protein is Dipetalodipin.